A 3131-amino-acid polypeptide reads, in one-letter code: Intermembrane lipid transfer protein vps1302 (3131 aa).

Residues 2 to 115 (LEGLLANFLN…VLESKRRQMQ (114 aa)) enclose the Chorein N-terminal domain. Over residues 774–801 (DGKASDDDDNGDWRPESSESLDSHESEY) the composition is skewed to basic and acidic residues. Residues 774-807 (DGKASDDDDNGDWRPESSESLDSHESEYKLNNTP) form a disordered region. Residues 2085–2363 (KVMIYPPYVI…NYSWDFPILK (279 aa)) enclose the SHR-BD domain.

This sequence belongs to the VPS13 family.

Its subcellular location is the golgi apparatus. The protein localises to the trans-Golgi network. In terms of biological role, mediates the transfer of lipids between membranes at organelle contact sites. May play a role in mitochondrial lipid homeostasis, Golgi vesicle transport, reticulophagy, actin cytoskeleton organization and formation of the forespore membrane. The sequence is that of Intermembrane lipid transfer protein vps1302 from Schizosaccharomyces pombe (strain 972 / ATCC 24843) (Fission yeast).